The chain runs to 59 residues: Large ribosomal subunit protein uL30 (59 aa).

It belongs to the universal ribosomal protein uL30 family. As to quaternary structure, part of the 50S ribosomal subunit.

This Leptospira biflexa serovar Patoc (strain Patoc 1 / ATCC 23582 / Paris) protein is Large ribosomal subunit protein uL30.